A 74-amino-acid chain; its full sequence is MTLIFWTKNGQEMEFDLVENVEIDEKIITFDYYGEGEKRGVVFILNNLAGMAVEDENSESESKDGASWFKVYRG.

Residues 55–74 form a disordered region; that stretch reads DENSESESKDGASWFKVYRG.

This is an uncharacterized protein from Listeria innocua serovar 6a (strain ATCC BAA-680 / CLIP 11262).